An 89-amino-acid polypeptide reads, in one-letter code: MKLNVCFRICNFLFQFSLEFFSISSLHSISSLHSISLSLSLFFLVAILYNIYIYLFRSKKKPKRILFAIPPLCPLCSPCFFFGTSSMLL.

Transmembrane regions (helical) follow at residues 9–29 (ICNF…LHSI), 35–55 (ISLS…YIYL), and 65–85 (ILFA…FGTS).

The protein resides in the membrane. This is an uncharacterized protein from Schizosaccharomyces pombe (strain 972 / ATCC 24843) (Fission yeast).